The chain runs to 155 residues: Endoribonuclease YbeY (155 aa).

Residues His114, His118, and His124 each coordinate Zn(2+).

The protein belongs to the endoribonuclease YbeY family. The cofactor is Zn(2+).

The protein localises to the cytoplasm. In terms of biological role, single strand-specific metallo-endoribonuclease involved in late-stage 70S ribosome quality control and in maturation of the 3' terminus of the 16S rRNA. The sequence is that of Endoribonuclease YbeY from Shigella flexneri serotype 5b (strain 8401).